A 400-amino-acid polypeptide reads, in one-letter code: Phosphoglycerate kinase (400 aa).

Substrate contacts are provided by residues 22 to 24 (DFN), Arg38, 61 to 64 (HLGR), Arg119, and Arg152. Residues Lys205, Gly296, Glu327, and 353–356 (GGDT) contribute to the ATP site.

Belongs to the phosphoglycerate kinase family. In terms of assembly, monomer.

It is found in the cytoplasm. The catalysed reaction is (2R)-3-phosphoglycerate + ATP = (2R)-3-phospho-glyceroyl phosphate + ADP. It participates in carbohydrate degradation; glycolysis; pyruvate from D-glyceraldehyde 3-phosphate: step 2/5. The chain is Phosphoglycerate kinase from Campylobacter jejuni subsp. doylei (strain ATCC BAA-1458 / RM4099 / 269.97).